Reading from the N-terminus, the 361-residue chain is 1-deoxy-D-xylulose 5-phosphate reductoisomerase (361 aa).

NADPH-binding residues include Thr-12, Gly-13, Ser-14, Ile-15, Gly-38, and Asn-102. Lys-103 lines the 1-deoxy-D-xylulose 5-phosphate pocket. Position 104 (Glu-104) interacts with NADPH. A Mn(2+)-binding site is contributed by Asp-126. Residues Ser-127, Glu-128, Ser-152, and His-175 each contribute to the 1-deoxy-D-xylulose 5-phosphate site. Glu-128 lines the Mn(2+) pocket. An NADPH-binding site is contributed by Gly-181. 1-deoxy-D-xylulose 5-phosphate contacts are provided by Ser-188, Asn-193, Lys-194, and Glu-197. Glu-197 is a binding site for Mn(2+).

Belongs to the DXR family. Mg(2+) is required as a cofactor. Mn(2+) serves as cofactor.

It carries out the reaction 2-C-methyl-D-erythritol 4-phosphate + NADP(+) = 1-deoxy-D-xylulose 5-phosphate + NADPH + H(+). It participates in isoprenoid biosynthesis; isopentenyl diphosphate biosynthesis via DXP pathway; isopentenyl diphosphate from 1-deoxy-D-xylulose 5-phosphate: step 1/6. Catalyzes the NADPH-dependent rearrangement and reduction of 1-deoxy-D-xylulose-5-phosphate (DXP) to 2-C-methyl-D-erythritol 4-phosphate (MEP). The chain is 1-deoxy-D-xylulose 5-phosphate reductoisomerase from Leifsonia xyli subsp. xyli (strain CTCB07).